Here is a 201-residue protein sequence, read N- to C-terminus: Small ribosomal subunit protein uS4 (201 aa).

A disordered region spans residues 26–45; that stretch reads FEKRNYPPGQHGNNRRRGKK. In terms of domain architecture, S4 RNA-binding spans 93–153; sequence SRLDNVVYRM…EKSKSLAVVQ (61 aa).

The protein belongs to the universal ribosomal protein uS4 family. As to quaternary structure, part of the 30S ribosomal subunit. Contacts protein S5. The interaction surface between S4 and S5 is involved in control of translational fidelity.

In terms of biological role, one of the primary rRNA binding proteins, it binds directly to 16S rRNA where it nucleates assembly of the body of the 30S subunit. Functionally, with S5 and S12 plays an important role in translational accuracy. The sequence is that of Small ribosomal subunit protein uS4 from Christiangramia forsetii (strain DSM 17595 / CGMCC 1.15422 / KT0803) (Gramella forsetii).